The following is a 212-amino-acid chain: Methylthioribulose-1-phosphate dehydratase (212 aa).

Residues His-97 and His-99 each coordinate Zn(2+).

Belongs to the aldolase class II family. MtnB subfamily. As to quaternary structure, homotetramer. It depends on Zn(2+) as a cofactor.

The enzyme catalyses 5-(methylsulfanyl)-D-ribulose 1-phosphate = 5-methylsulfanyl-2,3-dioxopentyl phosphate + H2O. Its pathway is amino-acid biosynthesis; L-methionine biosynthesis via salvage pathway; L-methionine from S-methyl-5-thio-alpha-D-ribose 1-phosphate: step 2/6. Functionally, catalyzes the dehydration of methylthioribulose-1-phosphate (MTRu-1-P) into 2,3-diketo-5-methylthiopentyl-1-phosphate (DK-MTP-1-P). This Bacillus cereus (strain G9842) protein is Methylthioribulose-1-phosphate dehydratase.